The chain runs to 84 residues: Putative membrane protein insertion efficiency factor (84 aa).

The protein belongs to the UPF0161 family.

It localises to the cell inner membrane. Functionally, could be involved in insertion of integral membrane proteins into the membrane. The polypeptide is Putative membrane protein insertion efficiency factor (Acidiphilium cryptum (strain JF-5)).